Reading from the N-terminus, the 150-residue chain is SsrA-binding protein (150 aa).

The segment at 129–150 (ETEKQRDWQREKSRIMKGGSKE) is disordered.

This sequence belongs to the SmpB family.

It is found in the cytoplasm. Functionally, required for rescue of stalled ribosomes mediated by trans-translation. Binds to transfer-messenger RNA (tmRNA), required for stable association of tmRNA with ribosomes. tmRNA and SmpB together mimic tRNA shape, replacing the anticodon stem-loop with SmpB. tmRNA is encoded by the ssrA gene; the 2 termini fold to resemble tRNA(Ala) and it encodes a 'tag peptide', a short internal open reading frame. During trans-translation Ala-aminoacylated tmRNA acts like a tRNA, entering the A-site of stalled ribosomes, displacing the stalled mRNA. The ribosome then switches to translate the ORF on the tmRNA; the nascent peptide is terminated with the 'tag peptide' encoded by the tmRNA and targeted for degradation. The ribosome is freed to recommence translation, which seems to be the essential function of trans-translation. The sequence is that of SsrA-binding protein from Cupriavidus pinatubonensis (strain JMP 134 / LMG 1197) (Cupriavidus necator (strain JMP 134)).